The chain runs to 101 residues: Integration host factor subunit beta (101 aa).

Residues 62 to 84 are disordered; it reads RNPKTGESVALPGKHVPHFKPGK.

It belongs to the bacterial histone-like protein family. Heterodimer of an alpha and a beta chain.

In terms of biological role, this protein is one of the two subunits of integration host factor, a specific DNA-binding protein that functions in genetic recombination as well as in transcriptional and translational control. The sequence is that of Integration host factor subunit beta from Stenotrophomonas maltophilia (strain K279a).